The chain runs to 425 residues: Beta-1,4-galactosyltransferase galt-1 (425 aa).

Over Met-1–Lys-8 the chain is Cytoplasmic. Residues Ile-9–Thr-29 traverse the membrane as a helical; Signal-anchor for type II membrane protein segment. Over Arg-30 to Leu-425 the chain is Lumenal. 2 N-linked (GlcNAc...) asparagine glycosylation sites follow: Asn-109 and Asn-152. In terms of domain architecture, GT92 spans Lys-189–Lys-394.

The protein belongs to the glycosyltransferase 92 family. It depends on Mn(2+) as a cofactor. N-glycosylated. As to expression, expressed in intestine and coelomocytes.

The protein localises to the golgi apparatus. Its subcellular location is the golgi stack membrane. Its activity is regulated as follows. Inhibited by EDTA, Cu(2+) and Zn(2+). Catalyzes the transfer of beta-galactose from UDP-galactose to position 4 of alpha-1,6-linked fucose at the reducing end GlcNAc in N-glycan cores. Involved in susceptibility to the nematotoxic C.cinerea galectin Cgl2, likely by contributing to the synthesis of core alpha-1,6-fucosylated N-glycans to which Cgl2 binds. The protein is Beta-1,4-galactosyltransferase galt-1 of Caenorhabditis elegans.